A 481-amino-acid polypeptide reads, in one-letter code: Tetratricopeptide repeat protein 29 (481 aa).

Positions 1-18 are enriched in low complexity; it reads MASVGPVKTKTVTLKELT. Residues 1-53 are disordered; that stretch reads MASVGPVKTKTVTLKELTPPIPSPEKSACKGAKPDSNHMALVPVKPSQPGSGK. 6 TPR repeats span residues 191-224, 231-264, 271-310, 317-350, 357-390, and 397-430; these read CERC…AMES, QEVR…AMAL, VEAN…SQRV, ADSL…ARAA, KRAS…SEKA, and YRAT…ARKL.

Interacts with TAX-1.

The protein localises to the cytoplasm. It is found in the cytoskeleton. The protein resides in the flagellum axoneme. Its function is as follows. Axonemal protein which is implicated in axonemal and/or peri-axonemal structure assembly and regulates flagellum assembly and beating. This Trypanosoma brucei brucei (strain 927/4 GUTat10.1) protein is Tetratricopeptide repeat protein 29.